A 370-amino-acid chain; its full sequence is tRNA-specific 2-thiouridylase MnmA (370 aa).

ATP is bound by residues 12–19 (GMSGGVDS) and Leu-38. The active-site Nucleophile is Cys-105. A disulfide bond links Cys-105 and Cys-204. Gly-129 contacts ATP. The interaction with tRNA stretch occupies residues 153-155 (KDQ). The Cysteine persulfide intermediate role is filled by Cys-204. Positions 310-311 (RY) are interaction with tRNA.

This sequence belongs to the MnmA/TRMU family.

The protein resides in the cytoplasm. It catalyses the reaction S-sulfanyl-L-cysteinyl-[protein] + uridine(34) in tRNA + AH2 + ATP = 2-thiouridine(34) in tRNA + L-cysteinyl-[protein] + A + AMP + diphosphate + H(+). Its function is as follows. Catalyzes the 2-thiolation of uridine at the wobble position (U34) of tRNA, leading to the formation of s(2)U34. The protein is tRNA-specific 2-thiouridylase MnmA of Desulfitobacterium hafniense (strain Y51).